We begin with the raw amino-acid sequence, 778 residues long: Subtilisin-like protease SBT3.6 (778 aa).

The first 22 residues, 1–22, serve as a signal peptide directing secretion; sequence MMNYRTSIYVVLSLVIFLNVQR. Positions 23–113 are cleaved as a propeptide — activation peptide; that stretch reads SFVAESSAKR…VIPDSFYKLA (91 aa). The Inhibitor I9 domain maps to 34–113; the sequence is VHIVYLGEKQ…VIPDSFYKLA (80 aa). N-linked (GlcNAc...) asparagine glycosylation occurs at N69. The 509-residue stretch at 117–625 folds into the Peptidase S8 domain; sequence TWDYLGLSAA…GGLVNPEKSA (509 aa). D147 acts as the Charge relay system in catalysis. N158, N180, N202, and N206 each carry an N-linked (GlcNAc...) asparagine glycan. Catalysis depends on H222, which acts as the Charge relay system. Residues N237, N399, N414, and N541 are each glycosylated (N-linked (GlcNAc...) asparagine). One can recognise a PA domain in the interval 388–483; it reads SLVYPENPGN…ELGTDILLYT (96 aa). S556 serves as the catalytic Charge relay system. Residues N648, N724, and N759 are each glycosylated (N-linked (GlcNAc...) asparagine).

Belongs to the peptidase S8 family.

It is found in the secreted. In Arabidopsis thaliana (Mouse-ear cress), this protein is Subtilisin-like protease SBT3.6.